We begin with the raw amino-acid sequence, 329 residues long: BTB/POZ domain-containing adapter for CUL3-mediated RhoA degradation protein 1 (329 aa).

Residues 1–15 are compositionally biased toward low complexity; the sequence is MSAEASGPAAAEAPS. The segment at 1 to 21 is disordered; it reads MSAEASGPAAAEAPSLEVAKP. The 69-residue stretch at 41–109 folds into the BTB domain; it reads KYVKLNVGGS…LRDGSVPLPE (69 aa). Residues 280–302 are disordered; that stretch reads LEATGGAAGGGGASRGEDEDNRE.

The protein belongs to the BACURD family. In terms of assembly, homotetramer; forms a two-fold symmetric tetramer in solution. Interacts with CUL3; interaction is direct and forms a 5:5 heterodecamer. Component of the BCR(KCTD13) E3 ubiquitin ligase complex, at least composed of CUL3, KCTD13/BACURD1 and RBX1. Interacts with RHOA; with a preference for RhoA-GDP. Interacts with POLD2 and PCNA. Interacts with SPRTN.

It localises to the nucleus. The protein operates within protein modification; protein ubiquitination. Substrate-specific adapter of a BCR (BTB-CUL3-RBX1) E3 ubiquitin-protein ligase complex required for synaptic transmission. The BCR(KCTD13) E3 ubiquitin ligase complex mediates the ubiquitination of RHOA, leading to its degradation by the proteasome, thereby regulating the actin cytoskeleton and promoting synaptic transmission. The chain is BTB/POZ domain-containing adapter for CUL3-mediated RhoA degradation protein 1 (KCTD13) from Bos taurus (Bovine).